Reading from the N-terminus, the 353-residue chain is Photosystem II D2 protein (353 aa).

At threonine 2 the chain carries N-acetylthreonine. Threonine 2 carries the post-translational modification Phosphothreonine. The chain crosses the membrane as a helical span at residues 41 to 61 (CAYFAVGGWFTGTTFVTSWYT). Histidine 118 contacts chlorophyll a. The helical transmembrane segment at 125-141 (GFMLRQFELARSVQLRP) threads the bilayer. Pheophytin a-binding residues include glutamine 130 and asparagine 143. A helical membrane pass occupies residues 153–166 (VFVSVFLIYPLGQS). Residue histidine 198 participates in chlorophyll a binding. A helical transmembrane segment spans residues 208–228 (AALLCAIHGATVENTLFEDGD). Residues histidine 215 and phenylalanine 262 each contribute to the a plastoquinone site. Fe cation is bound at residue histidine 215. Histidine 269 is a Fe cation binding site. The helical transmembrane segment at 279 to 295 (GLWMSALGVVGLALNLR) threads the bilayer.

It belongs to the reaction center PufL/M/PsbA/D family. PSII is composed of 1 copy each of membrane proteins PsbA, PsbB, PsbC, PsbD, PsbE, PsbF, PsbH, PsbI, PsbJ, PsbK, PsbL, PsbM, PsbT, PsbX, PsbY, PsbZ, Psb30/Ycf12, at least 3 peripheral proteins of the oxygen-evolving complex and a large number of cofactors. It forms dimeric complexes. The D1/D2 heterodimer binds P680, chlorophylls that are the primary electron donor of PSII, and subsequent electron acceptors. It shares a non-heme iron and each subunit binds pheophytin, quinone, additional chlorophylls, carotenoids and lipids. There is also a Cl(-1) ion associated with D1 and D2, which is required for oxygen evolution. The PSII complex binds additional chlorophylls, carotenoids and specific lipids. serves as cofactor.

The protein localises to the plastid. It is found in the chloroplast thylakoid membrane. It carries out the reaction 2 a plastoquinone + 4 hnu + 2 H2O = 2 a plastoquinol + O2. Functionally, photosystem II (PSII) is a light-driven water:plastoquinone oxidoreductase that uses light energy to abstract electrons from H(2)O, generating O(2) and a proton gradient subsequently used for ATP formation. It consists of a core antenna complex that captures photons, and an electron transfer chain that converts photonic excitation into a charge separation. The D1/D2 (PsbA/PsbD) reaction center heterodimer binds P680, the primary electron donor of PSII as well as several subsequent electron acceptors. D2 is needed for assembly of a stable PSII complex. In Atropa belladonna (Belladonna), this protein is Photosystem II D2 protein.